The following is a 982-amino-acid chain: Coatomer subunit beta (982 aa).

HEAT repeat units follow at residues 16–53, 130–167, 241–278, and 317–352; these read SGAP…NGEP, ELVE…RFPE, YDKG…SPTA, and LQDS…NQNS.

In terms of assembly, oligomeric complex that consists of at least the alpha, beta, beta', gamma, delta, epsilon and zeta subunits.

The protein localises to the cytoplasm. The protein resides in the golgi apparatus membrane. It localises to the cytoplasmic vesicle. It is found in the COPI-coated vesicle membrane. Functionally, the coatomer is a cytosolic protein complex that binds to dilysine motifs and reversibly associates with Golgi non-clathrin-coated vesicles, which further mediate biosynthetic protein transport from the ER, via the Golgi up to the trans Golgi network. Coatomer complex is required for budding from Golgi membranes, and is essential for the retrograde Golgi-to-ER transport of dilysine-tagged proteins. This is Coatomer subunit beta from Trypanosoma brucei brucei.